The sequence spans 195 residues: Transmembrane protein 126A (195 aa).

At 1-33 (MENHKSNNKENITIVDISRKINQLPEAERNLLE) the chain is on the mitochondrial matrix side. Residues 34–54 (NGSVYVGLNAALCGLIANSLF) form a helical membrane-spanning segment. Residues 55–56 (RR) are Mitochondrial intermembrane-facing. A helical membrane pass occupies residues 57-77 (ILNVTKARIAAGLPMAGIPFL). Residues 78–110 (TTDLTYRCFVSFPLNTGDLDCETCTITRSGLTG) lie on the Mitochondrial matrix side of the membrane. Residues 111–131 (LVIGGLYPVFLAIPVNGGLAA) form a helical membrane-spanning segment. Over 132-158 (RYQSALLPHKGNILSYWIRTSKPVFRK) the chain is Mitochondrial intermembrane. The helical transmembrane segment at 159-175 (MLFPILLQTMFSAYLGS) threads the bilayer. Residues 176 to 195 (EQYKLLIKALQLSEPGKEIH) are Mitochondrial matrix-facing.

Belongs to the TMEM126 family. In terms of assembly, interacts with OXA1L; promoting cotranslational quality control in mitochondria. As to expression, strongly expressed in brain, cerebellum, skeletal muscle, testis. High expression also found in fetal brain, fetal retinal pigmentary epithelium, and fetal retina. Highly expressed in retinal ganglion cells.

It is found in the mitochondrion inner membrane. Functionally, protein required for the cotranslational protein quality control in the inner membrane of the mitochondria. Associates with newly synthesized polypeptides and may act as a chaperone that cooperates with OXA1L for the insertion of newly synthesized mitochondrial proteins into the inner membrane. Required for the assembly of the ND4 module of mitochondrial complex I. In Homo sapiens (Human), this protein is Transmembrane protein 126A.